A 206-amino-acid polypeptide reads, in one-letter code: Pyridoxine/pyridoxamine 5'-phosphate oxidase (206 aa).

FMN is bound by residues 53-58 (RMVLLK), 68-69 (YT), Lys75, and Gln97. Lys58 serves as a coordination point for substrate. 3 residues coordinate substrate: Tyr115, Arg119, and Ser123. FMN-binding positions include 132 to 133 (QS) and Trp177. Position 183–185 (183–185 (RLH)) interacts with substrate. Arg187 lines the FMN pocket.

The protein belongs to the pyridoxamine 5'-phosphate oxidase family. As to quaternary structure, homodimer. The cofactor is FMN.

It catalyses the reaction pyridoxamine 5'-phosphate + O2 + H2O = pyridoxal 5'-phosphate + H2O2 + NH4(+). The enzyme catalyses pyridoxine 5'-phosphate + O2 = pyridoxal 5'-phosphate + H2O2. Its pathway is cofactor metabolism; pyridoxal 5'-phosphate salvage; pyridoxal 5'-phosphate from pyridoxamine 5'-phosphate: step 1/1. It functions in the pathway cofactor metabolism; pyridoxal 5'-phosphate salvage; pyridoxal 5'-phosphate from pyridoxine 5'-phosphate: step 1/1. In terms of biological role, catalyzes the oxidation of either pyridoxine 5'-phosphate (PNP) or pyridoxamine 5'-phosphate (PMP) into pyridoxal 5'-phosphate (PLP). The chain is Pyridoxine/pyridoxamine 5'-phosphate oxidase from Allorhizobium ampelinum (strain ATCC BAA-846 / DSM 112012 / S4) (Agrobacterium vitis (strain S4)).